Here is a 589-residue protein sequence, read N- to C-terminus: MSVSVHETRKSRSSTGSMNISVFHKASHPDCVLAHLNTLRKHCMFTDVTLWAGDRAFPCHRAVLAASSRYFEAMFSHGLRESRDDTVNFQDNLHPEVLELLLDFAYSSRIVINEENAESLLEAGDMLQFHDVRDAAAEFLEKNLSPSNCLGMMVLSDAHQCRRLYEFSCRMSLVHFETVRQSEDFNSLSRDTLLDLISRDELETEDERVVFEAILQWVKHDLEQRKAHLPLLLRNVRLALLPSDCLKNAVSGEALLMADECTKLILDEAFRCKTKILLNDGVVTSPFARPRKAGHTLLILGGQTFMCDKIYQVDHKAKEIIPKADLPSPRKEFSASAIGCKVYVTGGRGSENGVSKDVWVYDTVHEEWSKAAPMLIARFGHGSAELENCLYVVGGHTSLAGIFPASPSVSLKQVEKYDPGDNKWTMVAPMRDGVSNAAVVSAKLKLFVFGGTSIHRDMVSKVQCFDPSENRWTIKAECPQPWRYTAAAVLGSQIFIMGGDTEYTAASAYRFDCETNQWTRIGDMTAKRMSCHAVASGNKLYVVGGYFGTQRCKTLDCYDPTSDTWNCITTVPYSLIPTAFVSTWKHLPA.

One can recognise a BTB domain in the interval 46–114 (TDVTLWAGDR…AYSSRIVINE (69 aa)). A BACK domain is found at 149 to 250 (CLGMMVLSDA…LPSDCLKNAV (102 aa)). 6 Kelch repeats span residues 296–340 (TLLI…AIGC), 341–388 (KVYV…ELEN), 389–444 (CLYV…SAKL), 446–492 (LFVF…VLGS), 493–538 (QIFI…ASGN), and 539–585 (KLYV…STWK).

Component of the BCR(KLHL25) E3 ubiquitin ligase complex, at least composed of CUL3, KLHL25 and RBX1.

Its pathway is protein modification; protein ubiquitination. Its function is as follows. Substrate-specific adapter of a BCR (BTB-CUL3-RBX1) E3 ubiquitin ligase complex involved in various processes, such as translation homeostasis and lipid synthesis. The BCR(KLHL25) ubiquitin ligase complex acts by mediating ubiquitination of hypophosphorylated EIF4EBP1 (4E-BP1): ubiquitination and subsequent degradation of hypophosphorylated EIF4EBP1 (4E-BP1) probably serves as a homeostatic mechanism to maintain translation and prevent eIF4E inhibition when eIF4E levels are low. The BCR(KLHL25) complex does not target EIF4EBP1 (4E-BP1) when it is hyperphosphorylated or associated with eIF4E. The BCR(KLHL25) complex also acts as a regulator of lipid synthesis by mediating ubiquitination and degradation of ACLY, thereby inhibiting lipid synthesis. BCR(KLHL25)-mediated degradation of ACLY promotes fatty acid oxidation and is required for differentiation of inducible regulatory T (iTreg) cells. The polypeptide is Kelch-like protein 25 (Mus musculus (Mouse)).